The following is a 514-amino-acid chain: Peptide chain release factor 3 (514 aa).

Positions 8–268 (KKRRTFAIIS…TFLEFAPEPH (261 aa)) constitute a tr-type G domain. GTP is bound by residues 17 to 24 (SHPDAGKT), 85 to 89 (DTPGH), and 139 to 142 (NKLD).

Belongs to the TRAFAC class translation factor GTPase superfamily. Classic translation factor GTPase family. PrfC subfamily.

The protein localises to the cytoplasm. Its function is as follows. Increases the formation of ribosomal termination complexes and stimulates activities of RF-1 and RF-2. It binds guanine nucleotides and has strong preference for UGA stop codons. It may interact directly with the ribosome. The stimulation of RF-1 and RF-2 is significantly reduced by GTP and GDP, but not by GMP. This Streptococcus uberis (strain ATCC BAA-854 / 0140J) protein is Peptide chain release factor 3.